Consider the following 397-residue polypeptide: MIIKPRVRGFICVTTHPAGCAASVREQIAYVARRGPIERGPKKVLVIGASTGYGLAARIAAAFGVGAATLGVFFERAPADAKPGTAGWYNSAAFHDEAAARGLQATSVNGDAFSDEIKHKTIDAIRRDLGQVDLVVYSVAAPRRTHPKTGVTHQSTLKPIGHAVRLRGIDTDNEAIKETLLQPATPDEIADTVAVMGGEDWRMWIDALDAAGVLADGAKTTAFTYLGEQVTHDIYWNGSIGEAKKDLDRTVLALRGKLAARGGDARVSVLKAVVTQASSAIPMMPLYLSLLFKVMKARGTHEGCIEQVDGLLRDSLYSAQPHVDAEGRLRADRLELDPAVQARVLELWDQVTDDNLYTLTDFAGYKAEFLRLFGFGIDGVDYDAPVEPNVRIPNLIE.

NAD(+) contacts are provided by residues 48 to 53 (GASTGY), 74 to 75 (FE), 111 to 112 (DA), and 139 to 140 (VA). A substrate-binding site is contributed by Y225. Residue Y235 is the Proton donor of the active site. NAD(+)-binding positions include K244 and 273–275 (VVT).

The protein belongs to the TER reductase family. In terms of assembly, monomer.

The catalysed reaction is a 2,3-saturated acyl-[ACP] + NAD(+) = a (2E)-enoyl-[ACP] + NADH + H(+). The protein operates within lipid metabolism; fatty acid biosynthesis. In terms of biological role, involved in the final reduction of the elongation cycle of fatty acid synthesis (FAS II). Catalyzes the reduction of a carbon-carbon double bond in an enoyl moiety that is covalently linked to an acyl carrier protein (ACP). The chain is Enoyl-[acyl-carrier-protein] reductase [NADH] from Burkholderia mallei (strain SAVP1).